Consider the following 604-residue polypeptide: Ectonucleoside triphosphate diphosphohydrolase 7 (604 aa).

The Cytoplasmic portion of the chain corresponds to 1-28 (MARISFSYLCPASWYFTVPTVSPFLRQR). The chain crosses the membrane as a helical span at residues 29–49 (VAFLGLFFISCLLLLMLIIDF). Residues 50-546 (RHWSASLPRD…QAHGSWFRLS (497 aa)) lie on the Vesicular side of the membrane. Glu-217 (proton acceptor) is an active-site residue. Asn-330 is a glycosylation site (N-linked (GlcNAc...) asparagine). Cysteines 448 and 477 form a disulfide. The helical transmembrane segment at 547–567 (FVYNHYLFFACILVVLLAIFL) threads the bilayer. At 568–604 (YLLRLRRIHHRQTRASAPLDLLWLEEVVPMMGVQVGP) the chain is on the cytoplasmic side.

Belongs to the GDA1/CD39 NTPase family. Requires Ca(2+) as cofactor. Mg(2+) serves as cofactor.

The protein resides in the cytoplasmic vesicle membrane. It catalyses the reaction a ribonucleoside 5'-triphosphate + H2O = a ribonucleoside 5'-diphosphate + phosphate + H(+). The catalysed reaction is UTP + H2O = UDP + phosphate + H(+). It carries out the reaction GTP + H2O = GDP + phosphate + H(+). The enzyme catalyses CTP + H2O = CDP + phosphate + H(+). Its function is as follows. Catalyzes the hydrolysis of nucleoside triphosphates and diphosphates in a calcium- or magnesium-dependent manner. Preferentially hydrolyzes nucleoside 5'-triphosphates, with substrate preference for UTP &gt; GTP &gt; CTP. Hydrolyzes ATP and nucleoside diphosphates only to a minor extent. In Homo sapiens (Human), this protein is Ectonucleoside triphosphate diphosphohydrolase 7 (ENTPD7).